The following is a 172-amino-acid chain: Adenine phosphoribosyltransferase (172 aa).

Belongs to the purine/pyrimidine phosphoribosyltransferase family. In terms of assembly, homodimer.

Its subcellular location is the cytoplasm. The enzyme catalyses AMP + diphosphate = 5-phospho-alpha-D-ribose 1-diphosphate + adenine. The protein operates within purine metabolism; AMP biosynthesis via salvage pathway; AMP from adenine: step 1/1. In terms of biological role, catalyzes a salvage reaction resulting in the formation of AMP, that is energically less costly than de novo synthesis. This chain is Adenine phosphoribosyltransferase, found in Latilactobacillus sakei subsp. sakei (strain 23K) (Lactobacillus sakei subsp. sakei).